Here is an 899-residue protein sequence, read N- to C-terminus: Receptor-like protein kinase At3g21340 (899 aa).

Positions 1-27 (MEYHPQAIRLCALIFISFYALLHLVEA) are cleaved as a signal peptide. Residues 28 to 522 (QDQKGFISLD…GAKKMNVVIP (495 aa)) are Extracellular-facing. N-linked (GlcNAc...) asparagine glycans are attached at residues Asn100, Asn146, Asn185, Asn240, Asn266, Asn420, Asn436, Asn449, Asn468, and Asn475. 3 LRR repeats span residues 415–438 (IVTSLNLSSSHLTGIIAQGIQNLT), 439–461 (HLQELDLSNNNLTGGIPEFLADI), and 463–485 (SLLVINLSGNNFNGSIPQILLQK). Residues 523–543 (IVASVAFVVVLGSALAFFFIF) form a helical membrane-spanning segment. Over 544 to 899 (KKKKTSNSQD…FDIGATPDAR (356 aa)) the chain is Cytoplasmic. Thr583 bears the Phosphothreonine mark. The region spanning 592–865 (NNFERVLGKG…QVVIELNECL (274 aa)) is the Protein kinase domain. ATP is bound by residues 598-606 (LGKGGFGMV) and Lys620. At Tyr665 the chain carries Phosphotyrosine. Asp717 (proton acceptor) is an active-site residue. Ser751 is subject to Phosphoserine. Phosphothreonine occurs at positions 752 and 757. Tyr765 bears the Phosphotyrosine mark.

The protein belongs to the protein kinase superfamily. Ser/Thr protein kinase family. Autophosphorylated on Tyr and Thr residues.

The protein localises to the cell membrane. It catalyses the reaction L-seryl-[protein] + ATP = O-phospho-L-seryl-[protein] + ADP + H(+). It carries out the reaction L-threonyl-[protein] + ATP = O-phospho-L-threonyl-[protein] + ADP + H(+). The enzyme catalyses L-tyrosyl-[protein] + ATP = O-phospho-L-tyrosyl-[protein] + ADP + H(+). Functionally, probable receptor with a dual specificity kinase activity acting on both serine/threonine- and tyrosine-containing substrates. This is Receptor-like protein kinase At3g21340 from Arabidopsis thaliana (Mouse-ear cress).